We begin with the raw amino-acid sequence, 487 residues long: L-tartrate/succinate antiporter (487 aa).

Topologically, residues 1–9 (MKPSTEWWR) are periplasmic. A helical membrane pass occupies residues 10-30 (YLAPLAVIAIIALLPVPAGLE). Residues 31–32 (NH) lie on the Cytoplasmic side of the membrane. 2 helical membrane passes run 33 to 53 (TWLYFAVFTGVIVGLILEPVP) and 54 to 74 (GAVVAMVGISIIAILSPWLLF). Topologically, residues 75–92 (SPEQLAQPGFKFTAKSLS) are cytoplasmic. The helical transmembrane segment at 93 to 113 (WAVSGFSNSVIWLIFAAFMFG) threads the bilayer. The Periplasmic segment spans residues 114–136 (TGYEKTGLGRRIALILVKKMGHR). A helical transmembrane segment spans residues 137 to 157 (TLFLGYAVMFSELILAPVTPS). At 158-188 (NSARGAGIIYPIIRNLPPLYQSQPNDSSSRS) the chain is on the cytoplasmic side. A helical membrane pass occupies residues 189-209 (IGSYIMWMGIVADCVTSAIFL). At 210–235 (TAMAPNLLLIGLMKSASHATLSWGDW) the chain is on the periplasmic side. Residues 236–256 (FLGMLPLSILLVLLVPWLAYV) traverse the membrane as a helical segment. The Cytoplasmic segment spans residues 257–291 (LYPPVLKSGDQVPRWAETELQAMGPLCSREKRMLG). A run of 2 helical transmembrane segments spans residues 292-312 (LMVGALVLWIFGGDYIDAAMV) and 313-333 (GYSVVALMLLLRIISWDDIVS). At 334–339 (NKAAWN) the chain is on the cytoplasmic side. The chain crosses the membrane as a helical span at residues 340–360 (VFFWLASLITLATGLNNTGFI). Residues 361-369 (SWFGKLLAG) are Periplasmic-facing. Residues 370-390 (SLSGYSPTMVMVALIVVFYLL) traverse the membrane as a helical segment. Residues 391–392 (RY) are Cytoplasmic-facing. Residues 393–413 (FFASATAYTSALAPMMIAAAL) form a helical membrane-spanning segment. Residues 414 to 417 (AMPE) lie on the Periplasmic side of the membrane. The helical transmembrane segment at 418–438 (IPLPVFCLMVGAAIGLGSILT) threads the bilayer. The Cytoplasmic portion of the chain corresponds to 439–464 (PYATGPSPIYYGSGYLPTADYWRLGA). The chain crosses the membrane as a helical span at residues 465–485 (IFGLIFLVLLVITGLLWMPVV). The Periplasmic portion of the chain corresponds to 486–487 (LL).

This sequence belongs to the SLC13A/DASS transporter (TC 2.A.47) family. DIT1 subfamily.

It is found in the cell inner membrane. The enzyme catalyses (2R,3R)-tartrate(out) + succinate(in) = (2R,3R)-tartrate(in) + succinate(out). Catalyzes the uptake of tartrate in exchange for intracellular succinate. Essential for anaerobic L-tartrate fermentation. This Escherichia coli (strain K12) protein is L-tartrate/succinate antiporter.